A 187-amino-acid chain; its full sequence is Segregation and condensation protein B (187 aa).

It belongs to the ScpB family. Homodimer. Homodimerization may be required to stabilize the binding of ScpA to the Smc head domains. Component of a cohesin-like complex composed of ScpA, ScpB and the Smc homodimer, in which ScpA and ScpB bind to the head domain of Smc. The presence of the three proteins is required for the association of the complex with DNA.

It is found in the cytoplasm. Its function is as follows. Participates in chromosomal partition during cell division. May act via the formation of a condensin-like complex containing Smc and ScpA that pull DNA away from mid-cell into both cell halves. This is Segregation and condensation protein B from Agathobacter rectalis (strain ATCC 33656 / DSM 3377 / JCM 17463 / KCTC 5835 / VPI 0990) (Eubacterium rectale).